A 117-amino-acid chain; its full sequence is MSGVSTAAYFARRAAQKERVRILYRRALKDTLNWAVHRHIFYRDASDLREKFNVNQDVEDVDRIDKLIAHGEAEYNKWRHPDPYIVPWAPGGSKFCRNPTPPAGIEIVYNYGLEDNP.

N-acetylserine is present on Ser-2.

Belongs to the complex I LYR family. As to quaternary structure, complex I is composed of at least 49 different subunits. Expressed in roots, stems, flowers, rosette leaves, cauline leaves and siliques, with the highest expression in the stems.

It localises to the mitochondrion inner membrane. Accessory subunit of the mitochondrial membrane respiratory chain NADH dehydrogenase (Complex I), that is believed to be not involved in catalysis. Complex I functions in the transfer of electrons from NADH to the respiratory chain. The immediate electron acceptor for the enzyme is believed to be ubiquinone. Is required for correct plant growth and development. In Arabidopsis thaliana (Mouse-ear cress), this protein is NADH dehydrogenase [ubiquinone] 1 beta subcomplex subunit 9 (CIB22).